We begin with the raw amino-acid sequence, 591 residues long: Probable sulfoacetaldehyde acetyltransferase (591 aa).

The segment at 359–383 (MDHEDDDPGTEWNVGARQREPDRMS) is disordered.

Belongs to the TPP enzyme family. The cofactor is Mg(2+). Thiamine diphosphate is required as a cofactor.

It is found in the cytoplasm. The catalysed reaction is acetyl phosphate + sulfite + H(+) = sulfoacetaldehyde + phosphate. The protein operates within organosulfur degradation; taurine degradation via aerobic pathway; acetyl phosphate and sulfite from taurine: step 2/2. This is Probable sulfoacetaldehyde acetyltransferase (xsc) from Rhizobium meliloti (strain 1021) (Ensifer meliloti).